Consider the following 259-residue polypeptide: MQHTPRRRFGQNFLVDSQTVTDIVHALHPRREDVMVEIGPGLGALTQPLLQSLEHLHVVEIDRDIVKRLRNEFSAKRLTVHEGDALEFDFSSLGESLRVVGNLPYNISTPLLFHLSRFTDHLRDMHFMLQKEVVARMVAKPSTSDYGRLSVMLQCRFEMEQLFIVPPECFHPPPKVQSAVVRMIPLKKPLIEASQEKLFAEIVSAAFSQRRKILRNTLRDYLTGEDYLKLGIDSNLRAENLSITQYVAITNYFNRVRSG.

6 residues coordinate S-adenosyl-L-methionine: Asn-12, Leu-14, Gly-39, Glu-60, Asp-84, and Asn-102.

This sequence belongs to the class I-like SAM-binding methyltransferase superfamily. rRNA adenine N(6)-methyltransferase family. RsmA subfamily.

It is found in the cytoplasm. The catalysed reaction is adenosine(1518)/adenosine(1519) in 16S rRNA + 4 S-adenosyl-L-methionine = N(6)-dimethyladenosine(1518)/N(6)-dimethyladenosine(1519) in 16S rRNA + 4 S-adenosyl-L-homocysteine + 4 H(+). In terms of biological role, specifically dimethylates two adjacent adenosines (A1518 and A1519) in the loop of a conserved hairpin near the 3'-end of 16S rRNA in the 30S particle. May play a critical role in biogenesis of 30S subunits. The protein is Ribosomal RNA small subunit methyltransferase A of Nitrosospira multiformis (strain ATCC 25196 / NCIMB 11849 / C 71).